Here is a 423-residue protein sequence, read N- to C-terminus: Histidinol dehydrogenase (423 aa).

Residues Y116, Q177, and N200 each coordinate NAD(+). Residues S223, Q245, and H248 each coordinate substrate. Zn(2+)-binding residues include Q245 and H248. Active-site proton acceptor residues include E313 and H314. The substrate site is built by H314, D347, E401, and H406. Residue D347 participates in Zn(2+) binding. Position 406 (H406) interacts with Zn(2+).

The protein belongs to the histidinol dehydrogenase family. It depends on Zn(2+) as a cofactor.

It catalyses the reaction L-histidinol + 2 NAD(+) + H2O = L-histidine + 2 NADH + 3 H(+). It participates in amino-acid biosynthesis; L-histidine biosynthesis; L-histidine from 5-phospho-alpha-D-ribose 1-diphosphate: step 9/9. In terms of biological role, catalyzes the sequential NAD-dependent oxidations of L-histidinol to L-histidinaldehyde and then to L-histidine. The sequence is that of Histidinol dehydrogenase from Staphylococcus saprophyticus subsp. saprophyticus (strain ATCC 15305 / DSM 20229 / NCIMB 8711 / NCTC 7292 / S-41).